The chain runs to 136 residues: Glycine-rich RNA-binding protein 4, mitochondrial (136 aa).

The N-terminal 33 residues, 1-33 (MAFCNKLSGILRQGVSQSSNGPVTSMLGSLRYM), are a transit peptide targeting the mitochondrion. The 79-residue stretch at 35–113 (SKLFVGGLSW…RQIRVNLATE (79 aa)) folds into the RRM domain. Position 43 is a phosphoserine (Ser-43). The segment at 113 to 136 (ERSSAPRSSFGGGGGYGGGGGGGY) is disordered. The segment covering 122-136 (FGGGGGYGGGGGGGY) has biased composition (gly residues). The glycine-rich (GR) required for cell-to-cell movement stretch occupies residues 123–135 (GGGGGYGGGGGGG).

This sequence belongs to the GR-RBP family. Binds to small phloem-mobile single-stranded RNAs (ss-sRNA, e.g. small interfering RNA (siRNA) and microRNA (miRNA)) in the phloeme exudate, including viral-derived sRNA (vsiRNA). As to expression, abundantly expressed in young plants, root tips, and flowers, but weakly in mature leaves and stems, implying highly expression in actively proliferating organs.

Its subcellular location is the mitochondrion. The protein resides in the secreted. Possibly has a role in RNA transcription or processing during stress. Binds sequence non-specifically to RNAs and DNAs. Mediates cell-to-cell trafficking of RNA interference (RNAi) signals (small RNAs (sRNA), e.g. small interfering RNA (siRNA) and microRNA (miRNA)) which regulate growth and development, as well as responses to environmental inputs, including pathogen attack; can compromise zucchini yellow mosaic virus (ZYMV) and tobacco rattle virus (TRV) infections at the early stage. The sequence is that of Glycine-rich RNA-binding protein 4, mitochondrial from Arabidopsis thaliana (Mouse-ear cress).